Reading from the N-terminus, the 484-residue chain is tRNA sulfurtransferase (484 aa).

In terms of domain architecture, THUMP spans glutamine 63 to glutamine 167. Residues leucine 185–methionine 186, lysine 267, glycine 289, and glutamine 298 each bind ATP. The cysteines at positions 346 and 457 are disulfide-linked. Positions alanine 405–proline 483 constitute a Rhodanese domain. Cysteine 457 serves as the catalytic Cysteine persulfide intermediate.

The protein belongs to the ThiI family.

The protein localises to the cytoplasm. The catalysed reaction is [ThiI sulfur-carrier protein]-S-sulfanyl-L-cysteine + a uridine in tRNA + 2 reduced [2Fe-2S]-[ferredoxin] + ATP + H(+) = [ThiI sulfur-carrier protein]-L-cysteine + a 4-thiouridine in tRNA + 2 oxidized [2Fe-2S]-[ferredoxin] + AMP + diphosphate. The enzyme catalyses [ThiS sulfur-carrier protein]-C-terminal Gly-Gly-AMP + S-sulfanyl-L-cysteinyl-[cysteine desulfurase] + AH2 = [ThiS sulfur-carrier protein]-C-terminal-Gly-aminoethanethioate + L-cysteinyl-[cysteine desulfurase] + A + AMP + 2 H(+). It participates in cofactor biosynthesis; thiamine diphosphate biosynthesis. Its function is as follows. Catalyzes the ATP-dependent transfer of a sulfur to tRNA to produce 4-thiouridine in position 8 of tRNAs, which functions as a near-UV photosensor. Also catalyzes the transfer of sulfur to the sulfur carrier protein ThiS, forming ThiS-thiocarboxylate. This is a step in the synthesis of thiazole, in the thiamine biosynthesis pathway. The sulfur is donated as persulfide by IscS. This is tRNA sulfurtransferase from Pseudomonas syringae pv. tomato (strain ATCC BAA-871 / DC3000).